A 389-amino-acid chain; its full sequence is Zip homologous protein 3 (389 aa).

Residues 6 to 43 (CNKCFNRKPPDGFFISSCFHIFCTKCAKADLAVCLICK) form an RING-type zinc finger. A coiled-coil region spans residues 123-164 (LAEATAWIQMAEKKLQASEEERVKAEREIEECQAKLKSMTNL). Residues 366–389 (ISSQPGYLAQRKPINGRSFIGPAD) are disordered.

Interacts with zhp-4; the interaction is required for their localization along paired chromosomes and stability, and for the formation of chiasma during meiotic recombination. As to expression, expressed througout the gonad (at protein level). Expressed in the germline.

The protein resides in the chromosome. In terms of biological role, recruited co-dependently with zhp-4 to the synaptonemal complex between homologous chromosome pairs to regulate the formation and number of crossover events between homologs during meiotic recombination. In the early stages of pachytene, in complex with zhp-4, recruited by the zhp-1-zhp-2 heterodimer to designated crossover sites along the homolog pair to stabilize other pro-crossover factors such as rmh-1, msh-5 and cosa-1. This in turn facilitates crossover and promotes the formation of chiasma in each meiotic nucleus at the late pachytene stage of meiosis. Plays a role in the segregation of homologous chromosomes following the completion of crossovers. Together with him-14 and msh-5 plays a role in the activation of DNA damage-dependent apoptosis at the DNA damage checkpoint in pachytene cells. The protein is Zip homologous protein 3 of Caenorhabditis elegans.